Consider the following 310-residue polypeptide: Methionyl-tRNA formyltransferase (310 aa).

(6S)-5,6,7,8-tetrahydrofolate is bound at residue 110–113 (SLLP).

This sequence belongs to the Fmt family.

The enzyme catalyses L-methionyl-tRNA(fMet) + (6R)-10-formyltetrahydrofolate = N-formyl-L-methionyl-tRNA(fMet) + (6S)-5,6,7,8-tetrahydrofolate + H(+). In terms of biological role, attaches a formyl group to the free amino group of methionyl-tRNA(fMet). The formyl group appears to play a dual role in the initiator identity of N-formylmethionyl-tRNA by promoting its recognition by IF2 and preventing the misappropriation of this tRNA by the elongation apparatus. This Streptomyces avermitilis (strain ATCC 31267 / DSM 46492 / JCM 5070 / NBRC 14893 / NCIMB 12804 / NRRL 8165 / MA-4680) protein is Methionyl-tRNA formyltransferase.